Consider the following 120-residue polypeptide: Large ribosomal subunit protein bL19 (120 aa).

It belongs to the bacterial ribosomal protein bL19 family.

In terms of biological role, this protein is located at the 30S-50S ribosomal subunit interface and may play a role in the structure and function of the aminoacyl-tRNA binding site. The polypeptide is Large ribosomal subunit protein bL19 (Crocosphaera subtropica (strain ATCC 51142 / BH68) (Cyanothece sp. (strain ATCC 51142))).